A 431-amino-acid polypeptide reads, in one-letter code: Glucose-1-phosphate adenylyltransferase (431 aa).

Alpha-D-glucose 1-phosphate-binding positions include Tyr108, Gly174, 189–190, and Ser207; that span reads EK.

It belongs to the bacterial/plant glucose-1-phosphate adenylyltransferase family. Homotetramer.

The enzyme catalyses alpha-D-glucose 1-phosphate + ATP + H(+) = ADP-alpha-D-glucose + diphosphate. It functions in the pathway glycan biosynthesis; glycogen biosynthesis. Functionally, involved in the biosynthesis of ADP-glucose, a building block required for the elongation reactions to produce glycogen. Catalyzes the reaction between ATP and alpha-D-glucose 1-phosphate (G1P) to produce pyrophosphate and ADP-Glc. This Actinobacillus succinogenes (strain ATCC 55618 / DSM 22257 / CCUG 43843 / 130Z) protein is Glucose-1-phosphate adenylyltransferase.